The primary structure comprises 151 residues: Large ribosomal subunit protein uL22 (151 aa).

The protein belongs to the universal ribosomal protein uL22 family. As to quaternary structure, part of the 50S ribosomal subunit.

In terms of biological role, this protein binds specifically to 23S rRNA. It makes multiple contacts with different domains of the 23S rRNA in the assembled 50S subunit and ribosome. Its function is as follows. The globular domain of the protein is located near the polypeptide exit tunnel on the outside of the subunit, while an extended beta-hairpin is found that lines the wall of the exit tunnel in the center of the 70S ribosome. The chain is Large ribosomal subunit protein uL22 from Methanococcoides burtonii (strain DSM 6242 / NBRC 107633 / OCM 468 / ACE-M).